The chain runs to 366 residues: Autophagy-related protein 18b (366 aa).

WD repeat units lie at residues 6–44 (SLPS…LCYE), 178–218 (AHRS…KSYS), and 223–265 (TYPS…NQRS).

The protein belongs to the WD repeat PROPPIN family. In terms of assembly, component of the PI(3,5)P2 regulatory complex at least composed of ATG18, SAC/FIG4, FAB1 and VAC14. In terms of tissue distribution, expressed in roots, stems, flowers and leaves.

It is found in the preautophagosomal structure membrane. The protein localises to the vacuole membrane. The PI(3,5)P2 regulatory complex regulates both the synthesis and turnover of phosphatidylinositol 3,5-bisphosphate (PtdIns(3,5)P2). Required for autophagy. The chain is Autophagy-related protein 18b (ATG18B) from Arabidopsis thaliana (Mouse-ear cress).